We begin with the raw amino-acid sequence, 827 residues long: Discs large homolog 1-like protein (827 aa).

2 disordered regions span residues 38–61 and 102–133; these read HQDE…TPGP and SPVV…ANPP. Over residues 44–56 the composition is skewed to polar residues; the sequence is GSPQEPSSPQFTD. PDZ domains are found at residues 159–246, 254–341, and 403–484; these read EITL…RRRK, EIKL…AKPN, and KVVL…QYRP. Positions 518-588 constitute an SH3 domain; it reads KRSLYVRALF…PSKRRVEKKE (71 aa). The segment at 595-618 is disordered; it reads VKFNSKSREKGDNPDDMLSKGQSG. The Guanylate kinase-like domain occupies 637-812; it reads SRPVIILGPM…IYDQVKQIIE (176 aa).

It belongs to the MAGUK family.

It is found in the membrane. Its function is as follows. May play a role in synapse assembly and function. The chain is Discs large homolog 1-like protein (dlg1l) from Danio rerio (Zebrafish).